Reading from the N-terminus, the 428-residue chain is Acylglycerol kinase, mitochondrial (428 aa).

The hydrophobic stretch occupies residues 18–34 (STVGFCLLAYGSHWLYG). Residues 61 to 202 (SAIKKATVFL…LDVLQIKGEQ (142 aa)) enclose the DAGKc domain.

This sequence belongs to the AGK family. As to quaternary structure, component of the TIM22 complex. Mg(2+) is required as a cofactor.

It is found in the mitochondrion inner membrane. The protein resides in the mitochondrion intermembrane space. The catalysed reaction is a monoacylglycerol + ATP = a monoacyl-sn-glycero-3-phosphate + ADP + H(+). The enzyme catalyses a 1,2-diacyl-sn-glycerol + ATP = a 1,2-diacyl-sn-glycero-3-phosphate + ADP + H(+). It carries out the reaction an N-acylsphing-4-enine + ATP = an N-acylsphing-4-enine 1-phosphate + ADP + H(+). It catalyses the reaction 1-(9Z-octadecenoyl)-sn-glycerol + ATP = 1-(9Z-octadecenoyl)-sn-glycero-3-phosphate + ADP + H(+). The catalysed reaction is 1,2-di-(9Z-octadecenoyl)-sn-glycerol + ATP = 1,2-di-(9Z-octadecenoyl)-sn-glycero-3-phosphate + ADP + H(+). The enzyme catalyses a 1-acyl-sn-glycerol + ATP = a 1-acyl-sn-glycero-3-phosphate + ADP + H(+). It carries out the reaction 1-hexadecanoyl-sn-glycerol + ATP = 1-hexadecanoyl-sn-glycero-3-phosphate + ADP + H(+). It catalyses the reaction a 2-acylglycerol + ATP = a 2-acyl-sn-glycerol 3-phosphate + ADP + H(+). The catalysed reaction is 2-(5Z,8Z,11Z,14Z-eicosatetraenoyl)-glycerol + ATP = 2-(5Z,8Z,11Z,14Z-eicosatetraenoyl)-sn-glycero-3-phosphate + ADP + H(+). The enzyme catalyses 1-(5Z,8Z,11Z,14Z-eicosatetraenoyl)-sn-glycerol + ATP = 1-(5Z,8Z,11Z,14Z-eicosatetraenoyl)-sn-glycero-3-phosphate + ADP + H(+). It carries out the reaction N-(hexanoyl)sphing-4-enine + ATP = N-hexanoylsphing-4-enine 1-phosphate + ADP + H(+). It participates in lipid metabolism; glycerolipid metabolism. Functionally, lipid kinase that can phosphorylate both monoacylglycerol and diacylglycerol to form lysophosphatidic acid (LPA) and phosphatidic acid (PA), respectively. Phosphorylates ceramide but not sphingosine. Phosphorylates 1,2-dioleoylglycerol more rapidly than 2,3-dioleoylglycerol. Independently of its lipid kinase activity, acts as a component of the TIM22 complex. The TIM22 complex mediates the import and insertion of multi-pass transmembrane proteins into the mitochondrial inner membrane by forming a twin-pore translocase that uses the membrane potential as the external driving force. The sequence is that of Acylglycerol kinase, mitochondrial from Xenopus laevis (African clawed frog).